Consider the following 21-residue polypeptide: VSYNSKFLAATVQAEPVVLDA.

This sequence belongs to the carbon-nitrogen hydrolase superfamily. Nitrilase family.

The enzyme catalyses a nitrile + 2 H2O = a carboxylate + NH4(+). Functionally, acts on many kinds of nitrile compounds such as aliphatic, aromatic, and heterocyclic mononitriles or dinitriles. Prefers S-(-)-2-(4'-isobutylphenyl)-propionitrile to R-(+)-2-(4'-isobutylphenyl)-propionitrile as the substrate. This chain is Nitrilase, found in Acinetobacter sp. (strain AK226).